The sequence spans 99 residues: Aspartyl/glutamyl-tRNA(Asn/Gln) amidotransferase subunit C (99 aa).

The protein belongs to the GatC family. As to quaternary structure, heterotrimer of A, B and C subunits.

The enzyme catalyses L-glutamyl-tRNA(Gln) + L-glutamine + ATP + H2O = L-glutaminyl-tRNA(Gln) + L-glutamate + ADP + phosphate + H(+). The catalysed reaction is L-aspartyl-tRNA(Asn) + L-glutamine + ATP + H2O = L-asparaginyl-tRNA(Asn) + L-glutamate + ADP + phosphate + 2 H(+). Allows the formation of correctly charged Asn-tRNA(Asn) or Gln-tRNA(Gln) through the transamidation of misacylated Asp-tRNA(Asn) or Glu-tRNA(Gln) in organisms which lack either or both of asparaginyl-tRNA or glutaminyl-tRNA synthetases. The reaction takes place in the presence of glutamine and ATP through an activated phospho-Asp-tRNA(Asn) or phospho-Glu-tRNA(Gln). The sequence is that of Aspartyl/glutamyl-tRNA(Asn/Gln) amidotransferase subunit C from Solibacter usitatus (strain Ellin6076).